A 189-amino-acid chain; its full sequence is Apolipoprotein D (189 aa).

Positions 1-20 (MGMMLLLLSMLAGLVAEAEG) are cleaved as a signal peptide. Gln21 bears the Pyrrolidone carboxylic acid mark. Cystine bridges form between Cys28–Cys134 and Cys61–Cys185. N-linked (GlcNAc...) asparagine glycosylation is found at Asn65 and Asn98.

This sequence belongs to the calycin superfamily. Lipocalin family. As to quaternary structure, homodimer.

Its subcellular location is the secreted. APOD occurs in the macromolecular complex with lecithin-transport and binding of bilin. Appears to be able to transport a variety of ligands in a number of different contexts. The chain is Apolipoprotein D (APOD) from Cavia porcellus (Guinea pig).